We begin with the raw amino-acid sequence, 476 residues long: Eukaryotic translation initiation factor 3 subunit L (476 aa).

One can recognise a PCI domain in the interval 257-452; sequence DAIRMFSHIL…DLDYALEKDL (196 aa).

It belongs to the eIF-3 subunit L family. Component of the eukaryotic translation initiation factor 3 (eIF-3) complex.

The protein resides in the cytoplasm. Its function is as follows. Component of the eukaryotic translation initiation factor 3 (eIF-3) complex, which is involved in protein synthesis of a specialized repertoire of mRNAs and, together with other initiation factors, stimulates binding of mRNA and methionyl-tRNAi to the 40S ribosome. The eIF-3 complex specifically targets and initiates translation of a subset of mRNAs involved in cell proliferation. This is Eukaryotic translation initiation factor 3 subunit L from Aspergillus terreus (strain NIH 2624 / FGSC A1156).